A 360-amino-acid polypeptide reads, in one-letter code: DNA polymerase IV (360 aa).

Residues 8–189 form the UmuC domain; the sequence is IIHVDMDCFF…LPLEKIPGVG (182 aa). The Mg(2+) site is built by aspartate 12 and aspartate 107. Glutamate 108 is an active-site residue.

The protein belongs to the DNA polymerase type-Y family. In terms of assembly, monomer. It depends on Mg(2+) as a cofactor.

The protein localises to the cytoplasm. It carries out the reaction DNA(n) + a 2'-deoxyribonucleoside 5'-triphosphate = DNA(n+1) + diphosphate. Poorly processive, error-prone DNA polymerase involved in untargeted mutagenesis. Copies undamaged DNA at stalled replication forks, which arise in vivo from mismatched or misaligned primer ends. These misaligned primers can be extended by PolIV. Exhibits no 3'-5' exonuclease (proofreading) activity. May be involved in translesional synthesis, in conjunction with the beta clamp from PolIII. This chain is DNA polymerase IV, found in Vibrio cholerae serotype O1 (strain ATCC 39541 / Classical Ogawa 395 / O395).